The following is a 713-amino-acid chain: Undecaprenyl-diphosphooligosaccharide--protein glycotransferase (713 aa).

At 1-11 the chain is on the cytoplasmic side; the sequence is MLKKEYLKNPY. Residues 12–35 form a helical membrane-spanning segment; the sequence is LVLFAMIVLAYVFSVFCRFYWVWW. Over 36–96 the chain is Periplasmic; the sequence is ASEFNEYFFN…YWLYKITPFS (61 aa). The DXD motif 1 motif lies at 52–54; sequence SND. Asp-54 is a binding site for Mn(2+). A helical transmembrane segment spans residues 97–122; the sequence is FESIILYMSTFLSSLVVIPIILLANE. The Cytoplasmic segment spans residues 123-125; that stretch reads YKR. A helical membrane pass occupies residues 126 to 144; sequence PLMGFVAALLASVANSYYN. The Periplasmic segment spans residues 145–152; sequence RTMSGYYD. Asp-152 contributes to the Mn(2+) binding site. The DXD motif 2 motif lies at 152-154; sequence DTD. Residues 153-174 form a helical membrane-spanning segment; the sequence is TDMLVIVLPMFILFFMVRMILK. Residues 175–176 lie on the Cytoplasmic side of the membrane; the sequence is KD. Residues 177–192 traverse the membrane as a helical segment; that stretch reads FFSLIALPLFIGIYLW. Topologically, residues 193-197 are periplasmic; that stretch reads WYPSS. 194–196 is a binding site for [alpha-D-GalNAc-(1-&gt;4)]2-[beta-D-Glc-(1-&gt;3)]-[alpha-D-GalNAc-(1-&gt;4)]2-alpha-D-GalNAc-(1-&gt;3)-alpha-D-diNAcBac-tri-trans,hepta-cis-undecaprenyl diphosphate; it reads YPS. Residues 198 to 215 form a helical membrane-spanning segment; sequence YTLNVALIGLFLIYTLIF. At 216 to 220 the chain is on the cytoplasmic side; the sequence is HRKEK. A helical membrane pass occupies residues 221-233; the sequence is IFYIAVILSSLTL. Residues 234–237 are Periplasmic-facing; it reads SNIA. Residues 238–254 form a helical membrane-spanning segment; sequence WFYQSAIIVILFALFAL. Residues 255–260 lie on the Cytoplasmic side of the membrane; sequence EQKRLN. Residues 261 to 278 form a helical membrane-spanning segment; that stretch reads FMIIGILGSATLIFLILS. Residues 279–324 are Periplasmic-facing; that stretch reads GGVDPILYQLKFYIFRSDESANLTQGFMYFNVNQTIQEVENVDFSE. [alpha-D-GalNAc-(1-&gt;4)]2-[beta-D-Glc-(1-&gt;3)]-[alpha-D-GalNAc-(1-&gt;4)]2-alpha-D-GalNAc-(1-&gt;3)-alpha-D-diNAcBac-tri-trans,hepta-cis-undecaprenyl diphosphate is bound at residue Tyr-291. A TIXE motif motif is present at residues 313-316; that stretch reads TIQE. Glu-316 is a binding site for Mn(2+). The helical transmembrane segment at 325–347 threads the bilayer; the sequence is FMRRISGSEIVFLFSLFGFVWLL. Residues 348–352 are Cytoplasmic-facing; it reads RKHKS. Residues 353-369 traverse the membrane as a helical segment; that stretch reads MIMALPILVLGFLALKG. The Periplasmic portion of the chain corresponds to 370-373; it reads GLRF. Residue Arg-372 participates in [alpha-D-GalNAc-(1-&gt;4)]2-[beta-D-Glc-(1-&gt;3)]-[alpha-D-GalNAc-(1-&gt;4)]2-alpha-D-GalNAc-(1-&gt;3)-alpha-D-diNAcBac-tri-trans,hepta-cis-undecaprenyl diphosphate binding. Residues 374-396 form a helical membrane-spanning segment; the sequence is TIYSVPVMALGFGFLLSEFKAIL. Residues 397 to 406 lie on the Cytoplasmic side of the membrane; it reads VKKYSQLTSN. Residues 407–427 traverse the membrane as a helical segment; sequence VCIVFATILTLAPVFIHIYNY. Residues 428-713 are Periplasmic-facing; that stretch reads KAPTVFSQNE…RDAKVFKLKI (286 aa). Residues 457 to 459 form an interacts with target acceptor peptide in protein substrate region; sequence WWD. The short motif at 457–461 is the WWDYG motif element; the sequence is WWDYG. A [alpha-D-GalNAc-(1-&gt;4)]2-[beta-D-Glc-(1-&gt;3)]-[alpha-D-GalNAc-(1-&gt;4)]2-alpha-D-GalNAc-(1-&gt;3)-alpha-D-diNAcBac-tri-trans,hepta-cis-undecaprenyl diphosphate-binding site is contributed by Tyr-462. Asn-534 is a glycosylation site (N-linked (DATDGlc) asparagine). The short motif at 568 to 575 is the MI motif element; the sequence is MSLIFSTV.

The protein belongs to the STT3 family. The cofactor is Mg(2+). Mn(2+) is required as a cofactor.

It localises to the cell inner membrane. It carries out the reaction tritrans,heptacis-undecaprenyl diphosphooligosaccharide + [protein]-L-asparagine = tritrans,heptacis-undecaprenyl diphosphate + a glycoprotein with the oligosaccharide chain attached by N-beta-D-glycosyl linkage to protein L-asparagine.. Its pathway is protein modification; protein glycosylation. Functionally, oligosaccharyl transferase (OST) that catalyzes the initial transfer of a defined glycan (GalNAc(2)GlcGalNAc(3)Bac(NAc)(2) in eubacteria, where Bac(NAc)(2) is di-N-acetyl bacillosamine) from the lipid carrier undecaprenol-pyrophosphate to an asparagine residue within an Asp/Glu-Asn-X-Ser/Thr consensus motif in nascent polypeptide chains, the first step in protein N-glycosylation. The protein is Undecaprenyl-diphosphooligosaccharide--protein glycotransferase (pglB) of Campylobacter jejuni subsp. jejuni serotype O:2 (strain ATCC 700819 / NCTC 11168).